A 427-amino-acid chain; its full sequence is Serine--tRNA ligase (427 aa).

233–235 lines the L-serine pocket; the sequence is TAE. Residue 264-266 participates in ATP binding; that stretch reads RSE. Glu-287 serves as a coordination point for L-serine. An ATP-binding site is contributed by 351 to 354; sequence EISS. Ser-386 serves as a coordination point for L-serine.

Belongs to the class-II aminoacyl-tRNA synthetase family. Type-1 seryl-tRNA synthetase subfamily. Homodimer. The tRNA molecule binds across the dimer.

The protein localises to the cytoplasm. It carries out the reaction tRNA(Ser) + L-serine + ATP = L-seryl-tRNA(Ser) + AMP + diphosphate + H(+). The enzyme catalyses tRNA(Sec) + L-serine + ATP = L-seryl-tRNA(Sec) + AMP + diphosphate + H(+). It participates in aminoacyl-tRNA biosynthesis; selenocysteinyl-tRNA(Sec) biosynthesis; L-seryl-tRNA(Sec) from L-serine and tRNA(Sec): step 1/1. Functionally, catalyzes the attachment of serine to tRNA(Ser). Is also able to aminoacylate tRNA(Sec) with serine, to form the misacylated tRNA L-seryl-tRNA(Sec), which will be further converted into selenocysteinyl-tRNA(Sec). This chain is Serine--tRNA ligase, found in Thiobacillus denitrificans (strain ATCC 25259 / T1).